Consider the following 282-residue polypeptide: Bifunctional protein FolD (282 aa).

Residues 164–166 and Ser-189 contribute to the NADP(+) site; that span reads GRS.

This sequence belongs to the tetrahydrofolate dehydrogenase/cyclohydrolase family. As to quaternary structure, homodimer.

The enzyme catalyses (6R)-5,10-methylene-5,6,7,8-tetrahydrofolate + NADP(+) = (6R)-5,10-methenyltetrahydrofolate + NADPH. It catalyses the reaction (6R)-5,10-methenyltetrahydrofolate + H2O = (6R)-10-formyltetrahydrofolate + H(+). The protein operates within one-carbon metabolism; tetrahydrofolate interconversion. Functionally, catalyzes the oxidation of 5,10-methylenetetrahydrofolate to 5,10-methenyltetrahydrofolate and then the hydrolysis of 5,10-methenyltetrahydrofolate to 10-formyltetrahydrofolate. The polypeptide is Bifunctional protein FolD (Streptococcus suis (strain 98HAH33)).